A 341-amino-acid chain; its full sequence is UDP-3-O-acylglucosamine N-acyltransferase (341 aa).

Histidine 241 acts as the Proton acceptor in catalysis.

It belongs to the transferase hexapeptide repeat family. LpxD subfamily. Homotrimer.

The catalysed reaction is a UDP-3-O-[(3R)-3-hydroxyacyl]-alpha-D-glucosamine + a (3R)-hydroxyacyl-[ACP] = a UDP-2-N,3-O-bis[(3R)-3-hydroxyacyl]-alpha-D-glucosamine + holo-[ACP] + H(+). It functions in the pathway bacterial outer membrane biogenesis; LPS lipid A biosynthesis. Its function is as follows. Catalyzes the N-acylation of UDP-3-O-acylglucosamine using 3-hydroxyacyl-ACP as the acyl donor. Is involved in the biosynthesis of lipid A, a phosphorylated glycolipid that anchors the lipopolysaccharide to the outer membrane of the cell. The protein is UDP-3-O-acylglucosamine N-acyltransferase of Histophilus somni (strain 129Pt) (Haemophilus somnus).